The primary structure comprises 74 residues: Putative ribosome-binding protein YbzG (74 aa).

The protein is Putative ribosome-binding protein YbzG (ybzG) of Bacillus subtilis (strain 168).